Consider the following 629-residue polypeptide: tRNA uridine 5-carboxymethylaminomethyl modification enzyme MnmG (629 aa).

Residues 13–18, valine 125, and serine 180 each bind FAD; that span reads GGGHAG. 273–287 contributes to the NAD(+) binding site; it reads GPRYCPSIEDKVMRF. Glutamine 370 contacts FAD.

The protein belongs to the MnmG family. Homodimer. Heterotetramer of two MnmE and two MnmG subunits. The cofactor is FAD.

It localises to the cytoplasm. Its function is as follows. NAD-binding protein involved in the addition of a carboxymethylaminomethyl (cmnm) group at the wobble position (U34) of certain tRNAs, forming tRNA-cmnm(5)s(2)U34. The protein is tRNA uridine 5-carboxymethylaminomethyl modification enzyme MnmG of Serratia proteamaculans (strain 568).